Consider the following 342-residue polypeptide: Probable transposase for insertion-like sequence element IS1161 (342 aa).

Residues 182–342 (IEERPEEINN…KKLFELTQTA (161 aa)) form the Integrase catalytic domain.

Belongs to the transposase IS30 family.

Required for the transposition of the insertion element. The chain is Probable transposase for insertion-like sequence element IS1161 from Streptococcus salivarius.